The following is a 209-amino-acid chain: MPSLDYSQVTITALIASLAIGYLLGSIPFGLLLTRMAGLGDVRNIGSGNIGATNVLRTGNKKLAAATLLLDALKATAAALIAQKLFGSDTVHLPGLLGGFAAFIGHLFPVWLGFKGGKGVATYIGTLLGIFPLMVLVFAIVWLSIAFLSRYSSLSALVATLVIPVALWILGQPEAAMITSAMTVITWGKHKANIERLISGTESKIGKKG.

5 helical membrane passes run 13–33, 63–83, 94–114, 127–147, and 151–171; these read ALIASLAIGYLLGSIPFGLLL, LAAATLLLDALKATAAALIAQ, PGLLGGFAAFIGHLFPVWLGF, LLGIFPLMVLVFAIVWLSIAF, and YSSLSALVATLVIPVALWILG.

The protein belongs to the PlsY family. In terms of assembly, probably interacts with PlsX.

The protein localises to the cell inner membrane. It carries out the reaction an acyl phosphate + sn-glycerol 3-phosphate = a 1-acyl-sn-glycero-3-phosphate + phosphate. The protein operates within lipid metabolism; phospholipid metabolism. Its function is as follows. Catalyzes the transfer of an acyl group from acyl-phosphate (acyl-PO(4)) to glycerol-3-phosphate (G3P) to form lysophosphatidic acid (LPA). This enzyme utilizes acyl-phosphate as fatty acyl donor, but not acyl-CoA or acyl-ACP. The sequence is that of Glycerol-3-phosphate acyltransferase from Allorhizobium ampelinum (strain ATCC BAA-846 / DSM 112012 / S4) (Agrobacterium vitis (strain S4)).